Here is a 701-residue protein sequence, read N- to C-terminus: Glycine--tRNA ligase beta subunit (701 aa).

Belongs to the class-II aminoacyl-tRNA synthetase family. Tetramer of two alpha and two beta subunits.

It localises to the cytoplasm. It catalyses the reaction tRNA(Gly) + glycine + ATP = glycyl-tRNA(Gly) + AMP + diphosphate. The protein is Glycine--tRNA ligase beta subunit of Anaeromyxobacter dehalogenans (strain 2CP-1 / ATCC BAA-258).